The following is a 156-amino-acid chain: Small ribosomal subunit protein uS7 (156 aa).

This sequence belongs to the universal ribosomal protein uS7 family. Part of the 30S ribosomal subunit. Contacts proteins S9 and S11.

Its function is as follows. One of the primary rRNA binding proteins, it binds directly to 16S rRNA where it nucleates assembly of the head domain of the 30S subunit. Is located at the subunit interface close to the decoding center, probably blocks exit of the E-site tRNA. The sequence is that of Small ribosomal subunit protein uS7 from Shewanella woodyi (strain ATCC 51908 / MS32).